Here is a 230-residue protein sequence, read N- to C-terminus: MSKLVLIRHGQSEWNLSNQFTGWVDVNLSEKGVEEAKKAGRLIKEHGLEFDQAYTSLLTRAIKTLHYALEESDQLWIPETKTWRLNERHYGALQGLNKKATAEKYGDEQVHIWRRSYDVLPPAIDDDNEFSQAHDRRYANLDPHIVPKAENLHVTLDRVMPFWEDNIAPDLLDGKNVIIAAHGNSLRALTKYIENISDDDIMDLEMKTGEPVVYTFDENLDVVNKEKLDD.

Substrate-binding positions include Arg-8–Asn-15, Thr-21–Gly-22, Arg-60, Glu-87–Tyr-90, Lys-98, Arg-114–Arg-115, and Gly-183–Asn-184. The active-site Tele-phosphohistidine intermediate is the His-9. Glu-87 functions as the Proton donor/acceptor in the catalytic mechanism.

This sequence belongs to the phosphoglycerate mutase family. BPG-dependent PGAM subfamily.

The catalysed reaction is (2R)-2-phosphoglycerate = (2R)-3-phosphoglycerate. Its pathway is carbohydrate degradation; glycolysis; pyruvate from D-glyceraldehyde 3-phosphate: step 3/5. Catalyzes the interconversion of 2-phosphoglycerate and 3-phosphoglycerate. This Lactobacillus acidophilus (strain ATCC 700396 / NCK56 / N2 / NCFM) protein is 2,3-bisphosphoglycerate-dependent phosphoglycerate mutase.